The primary structure comprises 341 residues: Phosphoribosylformylglycinamidine cyclo-ligase (341 aa).

It belongs to the AIR synthase family.

The protein localises to the cytoplasm. The enzyme catalyses 2-formamido-N(1)-(5-O-phospho-beta-D-ribosyl)acetamidine + ATP = 5-amino-1-(5-phospho-beta-D-ribosyl)imidazole + ADP + phosphate + H(+). The protein operates within purine metabolism; IMP biosynthesis via de novo pathway; 5-amino-1-(5-phospho-D-ribosyl)imidazole from N(2)-formyl-N(1)-(5-phospho-D-ribosyl)glycinamide: step 2/2. This is Phosphoribosylformylglycinamidine cyclo-ligase from Synechococcus elongatus (strain ATCC 33912 / PCC 7942 / FACHB-805) (Anacystis nidulans R2).